Consider the following 326-residue polypeptide: Metal-binding protein YtgA (326 aa).

Residues 1–21 (MFFLHVRKYKHVIGGLLCLAG) form the signal peptide. Fe(2+) contacts are provided by histidine 75, histidine 141, histidine 207, and aspartate 299.

The protein belongs to the bacterial solute-binding protein 9 family. In terms of assembly, monomer.

The protein resides in the periplasm. Functionally, part of the ATP-binding cassette (ABC) transport system YtgABCD involved in metal import. Binds Fe(2+), Mn(2+) and Ni(2+), with a preference for Fe(2+) and delivers them to the membrane permease for translocation into the cytoplasm. The protein is Metal-binding protein YtgA of Chlamydia muridarum (strain MoPn / Nigg).